A 601-amino-acid chain; its full sequence is Elongation factor 4 (601 aa).

In terms of domain architecture, tr-type G spans 5-187 (IRKKNFCIIA…AICKYVPSPK (183 aa)). Residues 17-22 (DHGKST) and 134-137 (NKID) contribute to the GTP site.

It belongs to the TRAFAC class translation factor GTPase superfamily. Classic translation factor GTPase family. LepA subfamily.

Its subcellular location is the cell inner membrane. It carries out the reaction GTP + H2O = GDP + phosphate + H(+). Required for accurate and efficient protein synthesis under certain stress conditions. May act as a fidelity factor of the translation reaction, by catalyzing a one-codon backward translocation of tRNAs on improperly translocated ribosomes. Back-translocation proceeds from a post-translocation (POST) complex to a pre-translocation (PRE) complex, thus giving elongation factor G a second chance to translocate the tRNAs correctly. Binds to ribosomes in a GTP-dependent manner. The sequence is that of Elongation factor 4 from Borreliella afzelii (strain PKo) (Borrelia afzelii).